We begin with the raw amino-acid sequence, 137 residues long: Small ribosomal subunit protein uS12 (137 aa).

A disordered region spans residues Met1 to Lys57. A 3-methylthioaspartic acid modification is found at Asp102.

Belongs to the universal ribosomal protein uS12 family. In terms of assembly, part of the 30S ribosomal subunit. Contacts proteins S8 and S17. May interact with IF1 in the 30S initiation complex.

Its function is as follows. With S4 and S5 plays an important role in translational accuracy. Interacts with and stabilizes bases of the 16S rRNA that are involved in tRNA selection in the A site and with the mRNA backbone. Located at the interface of the 30S and 50S subunits, it traverses the body of the 30S subunit contacting proteins on the other side and probably holding the rRNA structure together. The combined cluster of proteins S8, S12 and S17 appears to hold together the shoulder and platform of the 30S subunit. The polypeptide is Small ribosomal subunit protein uS12 (Lactococcus lactis subsp. lactis (strain IL1403) (Streptococcus lactis)).